The sequence spans 185 residues: Acireductone dioxygenase (185 aa).

The interval 1-22 (MSRLSIHPEGSTNATSPAEPLL) is disordered. Residues His-102, His-104, Glu-108, and His-146 each contribute to the Fe(2+) site. Positions 102, 104, 108, and 146 each coordinate Ni(2+).

The protein belongs to the acireductone dioxygenase (ARD) family. As to quaternary structure, monomer. It depends on Fe(2+) as a cofactor. The cofactor is Ni(2+).

It catalyses the reaction 1,2-dihydroxy-5-(methylsulfanyl)pent-1-en-3-one + O2 = 3-(methylsulfanyl)propanoate + CO + formate + 2 H(+). The enzyme catalyses 1,2-dihydroxy-5-(methylsulfanyl)pent-1-en-3-one + O2 = 4-methylsulfanyl-2-oxobutanoate + formate + 2 H(+). It participates in amino-acid biosynthesis; L-methionine biosynthesis via salvage pathway; L-methionine from S-methyl-5-thio-alpha-D-ribose 1-phosphate: step 5/6. Catalyzes 2 different reactions between oxygen and the acireductone 1,2-dihydroxy-3-keto-5-methylthiopentene (DHK-MTPene) depending upon the metal bound in the active site. Fe-containing acireductone dioxygenase (Fe-ARD) produces formate and 2-keto-4-methylthiobutyrate (KMTB), the alpha-ketoacid precursor of methionine in the methionine recycle pathway. Ni-containing acireductone dioxygenase (Ni-ARD) produces methylthiopropionate, carbon monoxide and formate, and does not lie on the methionine recycle pathway. The chain is Acireductone dioxygenase from Prochlorococcus marinus (strain MIT 9313).